Consider the following 103-residue polypeptide: Co-chaperonin GroES (103 aa).

Belongs to the GroES chaperonin family. Heptamer of 7 subunits arranged in a ring. Interacts with the chaperonin GroEL.

It localises to the cytoplasm. Together with the chaperonin GroEL, plays an essential role in assisting protein folding. The GroEL-GroES system forms a nano-cage that allows encapsulation of the non-native substrate proteins and provides a physical environment optimized to promote and accelerate protein folding. GroES binds to the apical surface of the GroEL ring, thereby capping the opening of the GroEL channel. The sequence is that of Co-chaperonin GroES from Picosynechococcus sp. (strain ATCC 27264 / PCC 7002 / PR-6) (Agmenellum quadruplicatum).